We begin with the raw amino-acid sequence, 304 residues long: Nod factor export ATP-binding protein I (304 aa).

An ABC transporter domain is found at 6 to 236 (IDFQQVEKRY…EIGCDVIEIY (231 aa)). 38–45 (GPNGAGKT) is a binding site for ATP.

This sequence belongs to the ABC transporter superfamily. Lipooligosaccharide exporter (TC 3.A.1.102) family. In terms of assembly, the complex is composed of two ATP-binding proteins (NodI) and two transmembrane proteins (NodJ).

It localises to the cell inner membrane. Part of the ABC transporter complex NodIJ involved in the export of the nodulation factors (Nod factors), the bacterial signal molecules that induce symbiosis and subsequent nodulation induction. Nod factors are LCO (lipo-chitin oligosaccharide), a modified beta-1,4-linked N-acetylglucosamine oligosaccharide. This subunit is responsible for energy coupling to the transport system. This is Nod factor export ATP-binding protein I from Burkholderia thailandensis (strain ATCC 700388 / DSM 13276 / CCUG 48851 / CIP 106301 / E264).